Here is a 254-residue protein sequence, read N- to C-terminus: MSPAAARAAFRAGLRVPTSGYSAGWTQANLIALPRDYAYDFLLFAQRNPKSCPVLDVTEPGETSASIFAGDLRTDLPAYRVYRDGELVEEVGDVTGLWRDDLVSFLVGCSFTFEAALLEAGVPVRHIETGGNVPMYRTNRDCRPAGRMSGPLVVSMRPVPASMVATAVRITSRYPAVHGAPVHIGEPADLGIGDIDSPDFGEPVEIRPGEIPVFWACGVTPQAAVMQSRPPFAIGHAPGHMAITDARDSEFLVP.

It belongs to the D-glutamate cyclase family.

The polypeptide is Putative hydro-lyase SACE_1553 (Saccharopolyspora erythraea (strain ATCC 11635 / DSM 40517 / JCM 4748 / NBRC 13426 / NCIMB 8594 / NRRL 2338)).